The following is a 129-amino-acid chain: Lysozyme C (129 aa).

The region spanning 1–129 (KVFGRCELAA…VHAWIRGCRL (129 aa)) is the C-type lysozyme domain. 4 cysteine pairs are disulfide-bonded: Cys6–Cys127, Cys30–Cys115, Cys64–Cys80, and Cys76–Cys94. Residues Glu35 and Asp52 contribute to the active site.

This sequence belongs to the glycosyl hydrolase 22 family. As to quaternary structure, monomer.

It localises to the secreted. The enzyme catalyses Hydrolysis of (1-&gt;4)-beta-linkages between N-acetylmuramic acid and N-acetyl-D-glucosamine residues in a peptidoglycan and between N-acetyl-D-glucosamine residues in chitodextrins.. Lysozymes have primarily a bacteriolytic function; those in tissues and body fluids are associated with the monocyte-macrophage system and enhance the activity of immunoagents. This is Lysozyme C (LYZ) from Callipepla californica (California quail).